A 1434-amino-acid chain; its full sequence is Pleiotropic drug resistance protein 1 (1434 aa).

Residues 1–22 form a disordered region; sequence MEPANLSNLRGSSLRGSTRGSL. The ABC transporter 1 domain maps to 161–434; that stretch reads LNSLHILSSR…FESMGFKCPQ (274 aa). 194-201 is a binding site for ATP; sequence GPPSSGKT. The region spanning 512-725 is the ABC transmembrane type-2 1 domain; that stretch reads ELLKVCTERE…SVNSILVNEF (214 aa). 7 helical membrane-spanning segments follow: residues 530-550, 563-583, 618-638, 649-669, 675-695, 702-722, and 760-780; these read FVYM…MTLF, GGIY…NGMS, IPVT…VIGF, FLLL…IGAV, VAST…GFVL, SWWI…SILV, and IGVG…SLAL. The disordered stretch occupies residues 793–824; that stretch reads LPEDGENAENGEVSSQITSTDGGDSISESQNN. The segment covering 804–824 has biased composition (polar residues); it reads EVSSQITSTDGGDSISESQNN. The ABC transporter 2 domain maps to 837 to 1089; the sequence is ITFDDVVYSV…HLIKYFESNP (253 aa). 882 to 889 is an ATP binding site; the sequence is GVSGAGKT. The 215-residue stretch at 1162-1376 folds into the ABC transmembrane type-2 2 domain; it reads TQCVACLWKQ…TLYGLVASQF (215 aa). 7 helical membrane passes run 1181–1201, 1221–1241, 1269–1289, 1296–1316, 1326–1346, 1357–1377, and 1406–1426; these read YTAV…TMFW, YAAV…VVAI, IPYI…MIGF, FFWY…YGMM, VASI…GFII, WYYW…SQFG, and VVAA…AFAI.

The protein belongs to the ABC transporter superfamily. ABCG family. PDR (TC 3.A.1.205) subfamily.

The protein localises to the membrane. In terms of biological role, may be a general defense protein. This is Pleiotropic drug resistance protein 1 (PDR1) from Nicotiana tabacum (Common tobacco).